The primary structure comprises 388 residues: Putative N(4)-(beta-N-acetylglucosaminyl)-L-asparaginase GL17147 (388 aa).

The signal sequence occupies residues 1 to 20 (MYKAQYLWLFGLVLISRSAT). 2 disulfide bridges follow: Cys-94-Cys-99 and Cys-193-Cys-209. Thr-240 acts as the Nucleophile in catalysis. Substrate-binding positions include 268–271 (RVGD) and 291–294 (TGDG). Cys-351 and Cys-378 form a disulfide bridge.

Belongs to the Ntn-hydrolase family. As to quaternary structure, heterotetramer of two alpha and two beta chains arranged as a dimer of alpha/beta heterodimers. Post-translationally, cleaved into an alpha and beta chain by autocatalysis; this activates the enzyme. The N-terminal residue of the beta subunit is responsible for the nucleophile hydrolase activity.

The catalysed reaction is N(4)-(beta-N-acetyl-D-glucosaminyl)-L-asparagine + H2O = N-acetyl-beta-D-glucosaminylamine + L-aspartate + H(+). Functionally, cleaves the GlcNAc-Asn bond which joins oligosaccharides to the peptide of asparagine-linked glycoproteins. The protein is Putative N(4)-(beta-N-acetylglucosaminyl)-L-asparaginase GL17147 of Drosophila persimilis (Fruit fly).